Reading from the N-terminus, the 350-residue chain is Cell division protein ZipA (350 aa).

Residues 1 to 6 (MEDLQL) are Periplasmic-facing. A helical transmembrane segment spans residues 7–27 (VLFVLGAIAIVAVLVHGFWSI). Residues 28–350 (RKQQPRTIKE…QYLARIRANA (323 aa)) are Cytoplasmic-facing. Disordered regions lie at residues 36-55 (KEQP…AEGF), 65-136 (VRKL…PSAR), and 187-213 (RVPA…EEPL). Basic and acidic residues-rich tracts occupy residues 65 to 109 (VRKL…ESRA) and 116 to 131 (AAHE…HEEP).

The protein belongs to the ZipA family. Interacts with FtsZ via their C-terminal domains.

The protein localises to the cell inner membrane. Essential cell division protein that stabilizes the FtsZ protofilaments by cross-linking them and that serves as a cytoplasmic membrane anchor for the Z ring. Also required for the recruitment to the septal ring of downstream cell division proteins. This Shewanella amazonensis (strain ATCC BAA-1098 / SB2B) protein is Cell division protein ZipA.